Reading from the N-terminus, the 212-residue chain is Ion-translocating oxidoreductase complex subunit G (212 aa).

A helical membrane pass occupies residues 9 to 29 (GFLLALFALICTGLVAAVNQQ). An FMN phosphoryl threonine modification is found at threonine 176.

It belongs to the RnfG family. As to quaternary structure, the complex is composed of six subunits: RnfA, RnfB, RnfC, RnfD, RnfE and RnfG. FMN is required as a cofactor.

It localises to the cell inner membrane. Its function is as follows. Part of a membrane-bound complex that couples electron transfer with translocation of ions across the membrane. This Shewanella baltica (strain OS223) protein is Ion-translocating oxidoreductase complex subunit G.